Consider the following 231-residue polypeptide: MPVRILVVDDDRAVRESLRRSLSFNGYSVELAQDGREALDLIASDRPDAVVLDVMMPRLDGLEVCRQLRSTGDDLPILVLTARDSVSERVAGLDAGADDYLPKPFALEELLARMRALLRRTTPDDGAGESAAMTFSDLSLDPVTREVTRGDRPISLTRTEFSLLEMLIANPRRVLTRSRILEEVWGFDFPTSGNALEVYVGYLRRKTEAEGEPRLIHTVRGVGYVLRETPP.

One can recognise a Response regulatory domain in the interval 4-118 (RILVVDDDRA…ELLARMRALL (115 aa)). Position 48 is a 4-aspartylphosphate (D48). Residues 130-228 (SAAMTFSDLS…VRGVGYVLRE (99 aa)) constitute a DNA-binding region (ompR/PhoB-type).

In terms of processing, phosphorylated and dephosphorylated by MprB.

Its subcellular location is the cytoplasm. Functionally, member of the two-component regulatory system MprB/MprA which contributes to maintaining a balance among several systems involved in stress resistance and is required for establishment and maintenance of persistent infection in the host. Functions as a transcriptional regulator that recognizes a 19-bp nucleotide motif comprizing two loosely conserved 8-bp direct DNA-binding motif repeats separated by a 3-bp spacer region. The polypeptide is Response regulator MprA (mprA) (Mycolicibacterium vanbaalenii (strain DSM 7251 / JCM 13017 / BCRC 16820 / KCTC 9966 / NRRL B-24157 / PYR-1) (Mycobacterium vanbaalenii)).